We begin with the raw amino-acid sequence, 195 residues long: Small ribosomal subunit protein uS7 (195 aa).

It belongs to the universal ribosomal protein uS7 family. As to quaternary structure, part of the 30S ribosomal subunit.

One of the primary rRNA binding proteins, it binds directly to 16S rRNA where it nucleates assembly of the head domain of the 30S subunit. Is located at the subunit interface close to the decoding center. The sequence is that of Small ribosomal subunit protein uS7 from Sulfolobus acidocaldarius (strain ATCC 33909 / DSM 639 / JCM 8929 / NBRC 15157 / NCIMB 11770).